Reading from the N-terminus, the 387-residue chain is MAVIKMTDLDLAGKRVFIRSDLNVPVKDGKVTSDARIRASLPTIEDSLKQGARVMVTSHLGRPTEGEYNAEFSLQPVVDYLENKLSAPVRLAKDYLDGVDVAEGELVVLENVRFNKGEKKDDEALAKKYAALCDVFVMDAFGTAHRAQASTHGVGKFAAVACAGPLLFNELEALGKALDNPARPMVAIVGGSKVSTKLTVLDSLSKIADQLIVGGGIANTFVAAQGHNVGKSLYEADLISEAKRLLESSDIPVPTDVRVATEFSETATATLKSTSEIQDSEQILDLGDVSVARLAEILKNAKTILWNGPVGVFEFANFRKGTEVVARAIADSEAFSIAGGGDTLAAIDLFGIADQISYISTGGGAFLEFVEGKKLPAVVMLEERAKQ.

Residues D21–N23, R36, H59–R62, R113, and R146 contribute to the substrate site. ATP contacts are provided by residues K197, E314, and G340–T343.

This sequence belongs to the phosphoglycerate kinase family. As to quaternary structure, monomer.

It localises to the cytoplasm. The catalysed reaction is (2R)-3-phosphoglycerate + ATP = (2R)-3-phospho-glyceroyl phosphate + ADP. It functions in the pathway carbohydrate degradation; glycolysis; pyruvate from D-glyceraldehyde 3-phosphate: step 2/5. The sequence is that of Phosphoglycerate kinase from Sodalis glossinidius (strain morsitans).